Consider the following 171-residue polypeptide: MANPKNEAALAELKAQFAETDSIVLTEYRGLTVAQTTELRRALGDDVQYSVAKNTLVKIAAQEAGVEGLDDLLTGPTAVAFIKGEAVDTAKVLKKFGDDNKAFVVKGGYMDGNALTADQVKAIAELDNRETTLAKLAGAMKGNLAKAAGLFNAPASQVARLAAALQEKKDA.

The protein belongs to the universal ribosomal protein uL10 family. Part of the ribosomal stalk of the 50S ribosomal subunit. The N-terminus interacts with L11 and the large rRNA to form the base of the stalk. The C-terminus forms an elongated spine to which L12 dimers bind in a sequential fashion forming a multimeric L10(L12)X complex.

Forms part of the ribosomal stalk, playing a central role in the interaction of the ribosome with GTP-bound translation factors. The sequence is that of Large ribosomal subunit protein uL10 from Corynebacterium efficiens (strain DSM 44549 / YS-314 / AJ 12310 / JCM 11189 / NBRC 100395).